The chain runs to 127 residues: Tyrosine-protein phosphatase 2 (127 aa).

In terms of domain architecture, Tyrosine-protein phosphatase spans Q1–V127. Residues V63–P81 are compositionally biased toward acidic residues. Residues V63 to E82 are disordered.

The protein belongs to the protein-tyrosine phosphatase family.

It carries out the reaction O-phospho-L-tyrosyl-[protein] + H2O = L-tyrosyl-[protein] + phosphate. The sequence is that of Tyrosine-protein phosphatase 2 (STY-2) from Styela plicata (Wrinkled sea squirt).